A 548-amino-acid chain; its full sequence is MKKVTAMLFSMAVGLNAVSMAAKAKASEEQETDVLLIGGGIMSATLGTYLRELEPEWSMTMVERLEGVAQESSNGWNNAGTGHSALMELNYTPQNADGSISIEKAVAINEAFQISRQFWAHQVERGVLRTPRSFINTVPHMSFVWGEDNVNFLRARYAALQQSSLFRGMRYSEDHAQIKEWAPLVMEGRDPQQKVAATRTEIGTDVNYGEITRQLIASLQKKSNFSLQLSSEVRALKRNDDNTWTVTVADLKNGTAQNIRAKFVFIGAGGAALKLLQESGIPEAKDYAGFPVGGQFLVSENPDVVNHHLAKVYGKASVGAPPMSVPHIDTRVLDGKRVVLFGPFATFSTKFLKNGSLWDLMSSTTTSNVMPMMHVGLDNFDLVKYLVSQVMLSEEDRFEALKEYYPQAKKEDWRLWQAGQRVQIIKRDAEKGGVLRLGTEVVSDQQGTIAALLGASPGASTAAPIMLDLLEKVFGDRVSSPQWQATLKAIVPSYGRKLNGDVAATERELQYTSEVLGLKYDKPQAADSTPKPQFKPQPVQKEVADIAL.

It belongs to the MQO family. Requires FAD as cofactor.

The catalysed reaction is (S)-malate + a quinone = a quinol + oxaloacetate. It functions in the pathway carbohydrate metabolism; tricarboxylic acid cycle; oxaloacetate from (S)-malate (quinone route): step 1/1. The protein is Probable malate:quinone oxidoreductase of Escherichia coli (strain SE11).